A 172-amino-acid chain; its full sequence is Peptide deformylase (172 aa).

Fe cation contacts are provided by cysteine 91 and histidine 133. Residue glutamate 134 is part of the active site. A Fe cation-binding site is contributed by histidine 137.

It belongs to the polypeptide deformylase family. Fe(2+) is required as a cofactor.

The enzyme catalyses N-terminal N-formyl-L-methionyl-[peptide] + H2O = N-terminal L-methionyl-[peptide] + formate. Functionally, removes the formyl group from the N-terminal Met of newly synthesized proteins. Requires at least a dipeptide for an efficient rate of reaction. N-terminal L-methionine is a prerequisite for activity but the enzyme has broad specificity at other positions. This chain is Peptide deformylase, found in Vibrio campbellii (strain ATCC BAA-1116).